We begin with the raw amino-acid sequence, 430 residues long: T-kininogen 1 (430 aa).

Positions 1 to 18 (MKLITILLLCSRLLPSLA) are cleaved as a signal peptide. The residue at position 19 (Gln19) is a Pyrrolidone carboxylic acid. The 104-residue stretch at 28 to 131 (CNDETVFQAV…TQICNITPGK (104 aa)) folds into the Cystatin kininogen-type 1 domain. 9 cysteine pairs are disulfide-bonded: Cys28–Cys404, Cys83–Cys94, Cys107–Cys125, Cys141–Cys144, Cys205–Cys217, Cys228–Cys247, Cys263–Cys266, Cys327–Cys339, and Cys350–Cys369. A glycan (N-linked (GlcNAc...) asparagine) is linked at Asn82. The Cystatin kininogen-type 2 domain maps to 150–253 (MDSSDLKPVL…SQSCDLYPGD (104 aa)). N-linked (GlcNAc...) asparagine glycans are attached at residues Asn168 and Asn204. Positions 272–375 (VDSPELKEAL…TVRCQALDMM (104 aa)) constitute a Cystatin kininogen-type 3 domain. Residue Asn326 is glycosylated (N-linked (GlcNAc...) asparagine). Positions 411-430 (SKARAGPAPDHQAEASTVTP) are disordered.

As T-kinin is preceded by a Met instead of an Arg or Lys, it is not released from its precursor by either tissue or plasma kallikrein. Plasma.

It is found in the secreted. Its subcellular location is the extracellular space. Kininogens are plasma glycoproteins with a number of functions: (1) as precursor of the active peptide bradykinin they effect smooth muscle contraction, induction of hypotension and increase of vascular permeability. (2) They play a role in blood coagulation by helping to position optimally prekallikrein and factor XI next to factor XII. (3) They are inhibitor of thiol proteases. This chain is T-kininogen 1 (Map1), found in Rattus norvegicus (Rat).